Reading from the N-terminus, the 894-residue chain is Histone-lysine N-methyltransferase PRDM9 (894 aa).

Disordered regions lie at residues 1 to 23 (MSPE…RKPM) and 143 to 174 (SGSE…LRKK). The region spanning 23-86 (MVKDAFKDIS…RRQAIKLQVD (64 aa)) is the KRAB-related domain. Positions 143-164 (SGSEQAQKPVSPSGEASTSGQH) are enriched in polar residues. Zn(2+) contacts are provided by Cys205, Cys208, Cys216, and His219. One can recognise an SET domain in the interval 244–358 (PGLRIGPSGI…PGCELLVWYG (115 aa)). Residues 256 to 258 (AGL), Tyr291, and 320 to 321 (NC) each bind S-adenosyl-L-methionine. Substrate is bound at residue 288–294 (NNGYSWL). Tyr357 is a substrate binding site. Lys368 is subject to N6,N6,N6-trimethyllysine; alternate. Lys368 is modified (N6-methyllysine; alternate). N6-methyllysine is present on residues Lys372 and Lys374. The C2H2-type 1 zinc finger occupies 388-411 (HPCPSCCLAFSSQKFLSQHVERNH). Positions 390, 393, 406, and 411 each coordinate Zn(2+). The segment at 408–469 (ERNHSSQNFP…SKLLNKRTWQ (62 aa)) is disordered. The span at 444 to 461 (PHSRNDKTKGQEIKERSK) shows a compositional bias: basic and acidic residues. The segment at 524–546 (VKYGECGQGFSVKSDVITHQRTH) adopts a C2H2-type 2; degenerate zinc-finger fold. 12 consecutive C2H2-type zinc fingers follow at residues 552-574 (YVCR…QRIH), 580-602 (YVCR…QRTH), 608-630 (YVCR…QRRH), 636-658 (YVCR…QRRH), 664-686 (YVCR…QRTH), 692-714 (YVCR…QRTH), 720-742 (YVCR…QRTH), 748-770 (YVCR…QRTH), 776-798 (YVCR…QRTH), 804-826 (YVCR…QRTH), 832-854 (YVCR…QRTH), and 860-882 (YVCR…QRTH). Zn(2+) contacts are provided by Cys722, Cys725, His738, His742, Cys750, Cys753, His766, His770, Cys778, Cys781, His794, His798, Cys806, Cys809, His822, and His826. A DNA-binding region spans residues 730-820 (SNKSHLLRHQ…RGFSNKSHLL (91 aa)).

The protein belongs to the class V-like SAM-binding methyltransferase superfamily. In terms of assembly, homodimer. Interacts with EHMT2 and CDYL; interaction only takes place when PRDM9 is bound to hotspot DNA. Interacts with CXXC1; this interaction does not link PRDM9-activated recombination hotspot sites with DSB machinery and is not required for the hotspot recognition pathway. Forms a complex with EWSR1, REC8, SYCP3 and SYCP1; complex formation is dependent of phosphorylated form of REC8 and requires PRDM9 bound to hotspot DNA; EWSR1 joins PRDM9 with the chromosomal axis through REC8. In terms of processing, mono-methylated; automethylated. Tri-methylated; automethylated. Mono-methylation is predominant; automethylation is lower and slower than H3 peptide methylation and is in a highest S-adenosyl-L-methionine concentration-dependent. There are two major sites for automethylation at Lys-368 and Lys-374. Lysines can be simultaneously methylated, such as Lys-368(me3)/Lys-372(me1), Lys-368(me1)/Lys-374(me1) and Lys-368(me1)/Lys-372(me1)/Lys-374(me1). Automethylation is an intramolecular (cis) process.

It localises to the nucleus. It is found in the chromosome. The catalysed reaction is L-lysyl-[protein] + S-adenosyl-L-methionine = N(6)-methyl-L-lysyl-[protein] + S-adenosyl-L-homocysteine + H(+). It carries out the reaction N(6)-methyl-L-lysyl-[protein] + S-adenosyl-L-methionine = N(6),N(6)-dimethyl-L-lysyl-[protein] + S-adenosyl-L-homocysteine + H(+). It catalyses the reaction L-lysyl(4)-[histone H3] + 3 S-adenosyl-L-methionine = N(6),N(6),N(6)-trimethyl-L-lysyl(4)-[histone H3] + 3 S-adenosyl-L-homocysteine + 3 H(+). The enzyme catalyses L-lysyl(36)-[histone H3] + 3 S-adenosyl-L-methionine = N(6),N(6),N(6)-trimethyl-L-lysyl(36)-[histone H3] + 3 S-adenosyl-L-homocysteine + 3 H(+). The catalysed reaction is L-lysyl(9)-[histone H3] + 3 S-adenosyl-L-methionine = N(6),N(6),N(6)-trimethyl-L-lysyl(9)-[histone H3] + 3 S-adenosyl-L-homocysteine + 3 H(+). It carries out the reaction L-lysyl(20)-[histone H4] + S-adenosyl-L-methionine = N(6)-methyl-L-lysyl(20)-[histone H4] + S-adenosyl-L-homocysteine + H(+). It catalyses the reaction N(6)-methyl-L-lysyl(20)-[histone H4] + S-adenosyl-L-methionine = N(6),N(6)-dimethyl-L-lysyl(20)-[histone H4] + S-adenosyl-L-homocysteine + H(+). Its activity is regulated as follows. Inhibited by suramin with an IC(50) of 4.1 uM. Functionally, histone methyltransferase that sequentially mono-, di-, and tri-methylates both 'Lys-4' (H3K4) and 'Lys-36' (H3K36) of histone H3 to produce respectively trimethylated 'Lys-4' (H3K4me3) and trimethylated 'Lys-36' (H3K36me3) histone H3 and plays a key role in meiotic prophase by determining hotspot localization thereby promoting meiotic recombination. Can also methylate all four core histones with H3 being the best substrate and the most highly modified. Is also able, on one hand, to mono and di-methylate H4K20 and on other hand to trimethylate H3K9 with the di-methylated H3K9 as the best substrate. During meiotic prophase, binds specific DNA sequences through its zinc finger domains thereby determining hotspot localization where it promotes local H3K4me3 and H3K36me3 enrichment on the same nucleosomes through its histone methyltransferase activity. Thereby promotes double-stranded breaks (DSB) formation, at this subset of PRDM9-binding sites, that initiates meiotic recombination for the proper meiotic progression. During meiotic progression hotspot-bound PRDM9 interacts with several complexes; in early leptonema binds CDYL and EHMT2 followed by EWSR1 and CXXC1 by the end of leptonema. EWSR1 joins PRDM9 with the chromosomal axis through REC8. In this way, controls the DSB repair pathway, pairing of homologous chromosomes and sex body formation. Moreover plays a central role in the transcriptional activation of genes during early meiotic prophase thanks to H3K4me3 and H3K36me3 enrichment that represents a specific tag for epigenetic transcriptional activation. In addition performs automethylation. Acetylation and phosphorylation of histone H3 attenuate or prevent histone H3 methylation. The protein is Histone-lysine N-methyltransferase PRDM9 of Homo sapiens (Human).